The following is a 5054-amino-acid chain: Malformin synthetase mlfA (5054 aa).

The interval 194 to 585 is adenylation 1; that stretch reads ERRAANRPHS…CGRADTQVKL (392 aa). The region spanning 723-799 is the Carrier 1 domain; it reads LGLSQLEQEI…EASSLAEVQE (77 aa). At Ser-760 the chain carries O-(pantetheine 4'-phosphoryl)serine. Residues 837-1268 form a condensation 1 region; sequence EDVFPCTTMQ…ALNTLTLLQA (432 aa). The segment at 1296–1685 is adenylation 2; the sequence is DRWVTRQPES…GRKDTQVKLR (390 aa). The 78-residue stretch at 1823-1900 folds into the Carrier 2 domain; sequence TASSKLELTL…QLAAILGEAT (78 aa). The residue at position 1860 (Ser-1860) is an O-(pantetheine 4'-phosphoryl)serine. 2 disordered regions span residues 1899–1929 and 1964–1994; these read ATGQPESSASSTTEEGFTFSTPDDSSTNDGV and GSSSCKTPSVSSSSSSSSSRKKKSAKVVSPV. 2 stretches are compositionally biased toward low complexity: residues 1904 to 1927 and 1965 to 1981; these read ESSASSTTEEGFTFSTPDDSSTND and SSSCKTPSVSSSSSSSS. A condensation 2 region spans residues 2033–2448; the sequence is EDIYPATALQ…GVSYRDKQTL (416 aa). The tract at residues 2471 to 2863 is adenylation 3; sequence VRTPHAPAVF…IGRRDGQLKL (393 aa). One can recognise a Carrier 3 domain in the interval 2999–3075; that stretch reads RPATAQEREM…QLMRHLSANG (77 aa). An O-(pantetheine 4'-phosphoryl)serine modification is found at Ser-3036. 2 condensation regions span residues 3092–3557 and 3578–3997; these read WVPL…TYDQ and DIYP…EQLV. The tract at residues 4022–4412 is adenylation 4; that stretch reads HSSREAACAW…VGRKDNQIKF (391 aa). Residues 4546-4622 form the Carrier 4 domain; sequence MPFTAAECKM…DLAYRTANLV (77 aa). Ser-4583 carries the post-translational modification O-(pantetheine 4'-phosphoryl)serine. The tract at residues 4659–4972 is condensation 5; that stretch reads EVLPTTSFQR…LQTIVQHQNN (314 aa).

It belongs to the NRP synthetase family.

The protein operates within secondary metabolite biosynthesis. In terms of biological role, nonribosomal peptide synthetase; part of the gene cluster that mediates the biosynthesis of malformins, cyclic pentapeptides with a disulfide bond between 2 consecutive cysteins, that show potential anti-tumor as well as antimalarial and antitrypanosomal properties. The nonribosomal peptide synthetase mlfA is responsible of the formation of the cyclic pentapeptide. The malformin biosynthesis clusters in malformin-producing fungi also contain enzymes involved in the formation of the disulfide bond between the two consecutive cysteins within malformins, in addition to additional tailoring enzymes such as methyltransferases or oxidoreductases. They are also composed of up to 4 major facilitator superfamily transporters, and transcription factors probably involved in the regulation of the expression of those clusters. The sequence is that of Malformin synthetase mlfA from Aspergillus niger (strain ATCC MYA-4892 / CBS 513.88 / FGSC A1513).